The following is a 1358-amino-acid chain: DNA-directed RNA polymerase subunit beta (1358 aa).

The protein belongs to the RNA polymerase beta chain family. The RNAP catalytic core consists of 2 alpha, 1 beta, 1 beta' and 1 omega subunit. When a sigma factor is associated with the core the holoenzyme is formed, which can initiate transcription.

It catalyses the reaction RNA(n) + a ribonucleoside 5'-triphosphate = RNA(n+1) + diphosphate. In terms of biological role, DNA-dependent RNA polymerase catalyzes the transcription of DNA into RNA using the four ribonucleoside triphosphates as substrates. This is DNA-directed RNA polymerase subunit beta from Francisella tularensis subsp. novicida (strain U112).